A 479-amino-acid polypeptide reads, in one-letter code: UDP-N-acetylmuramate--L-alanine ligase (479 aa).

115-121 (GTHGKTT) contacts ATP.

The protein belongs to the MurCDEF family.

The protein resides in the cytoplasm. The enzyme catalyses UDP-N-acetyl-alpha-D-muramate + L-alanine + ATP = UDP-N-acetyl-alpha-D-muramoyl-L-alanine + ADP + phosphate + H(+). The protein operates within cell wall biogenesis; peptidoglycan biosynthesis. In terms of biological role, cell wall formation. The chain is UDP-N-acetylmuramate--L-alanine ligase from Acidiphilium cryptum (strain JF-5).